The sequence spans 496 residues: Catalase-A (496 aa).

Active-site residues include H54 and N128. Residue Y338 coordinates heme. The Microbody targeting signal motif lies at 494 to 496; it reads SNL.

It belongs to the catalase family. The cofactor is heme.

It localises to the peroxisome matrix. The enzyme catalyses 2 H2O2 = O2 + 2 H2O. In terms of biological role, catalyzes the degradation of hydrogen peroxide (H(2)O(2)) generated by peroxisomal oxidases to water and oxygen, thereby protecting cells from the toxic effects of hydrogen peroxide. The protein is Catalase-A (catA) of Dictyostelium discoideum (Social amoeba).